A 58-amino-acid polypeptide reads, in one-letter code: MSKFEVYLDEGGKYRFRLRARNGQIIAVSQGYKSEEGCIKGIQSVKENAPNARIIVLE.

It belongs to the UPF0339 family.

In Methanosarcina acetivorans (strain ATCC 35395 / DSM 2834 / JCM 12185 / C2A), this protein is UPF0339 protein MA_3316.